A 512-amino-acid polypeptide reads, in one-letter code: Protein arginine N-methyltransferase 2 (512 aa).

Residues 67-103 (TSNIDDLPLPPPIQEVEEEEPTQQNIEQQQQTQDESD) form a disordered region. Residues 88-99 (TQQNIEQQQQTQ) show a composition bias toward low complexity. One can recognise an SAM-dependent MTase PRMT-type domain in the interval 120 to 508 (DEEYFSSYSK…KTNPFDYSYQ (389 aa)). Histidine 133, arginine 142, glycine 166, and glutamate 217 together coordinate S-adenosyl-L-methionine. Catalysis depends on residues glutamate 231 and glutamate 240. Residues 375-395 (DDDDNDNNNNNNDNSNDDENK) are disordered.

The protein belongs to the class I-like SAM-binding methyltransferase superfamily. Protein arginine N-methyltransferase family.

It localises to the cytoplasm. Its subcellular location is the nucleus. It carries out the reaction L-arginyl-[protein] + 2 S-adenosyl-L-methionine = N(omega),N(omega)-dimethyl-L-arginyl-[protein] + 2 S-adenosyl-L-homocysteine + 2 H(+). Its function is as follows. Arginine methyltransferase that methylates the guanidino nitrogens of arginyl residues in some proteins such as histones. This chain is Protein arginine N-methyltransferase 2 (prmt2), found in Dictyostelium discoideum (Social amoeba).